We begin with the raw amino-acid sequence, 357 residues long: 3-dehydroquinate synthase (357 aa).

Residues 104–108 (GVVGD), 128–129 (TT), K141, and 168–171 (FLET) each bind NAD(+). Zn(2+) contacts are provided by E183, H243, and H260.

This sequence belongs to the sugar phosphate cyclases superfamily. Dehydroquinate synthase family. Co(2+) is required as a cofactor. It depends on Zn(2+) as a cofactor. The cofactor is NAD(+).

It localises to the cytoplasm. The enzyme catalyses 7-phospho-2-dehydro-3-deoxy-D-arabino-heptonate = 3-dehydroquinate + phosphate. It functions in the pathway metabolic intermediate biosynthesis; chorismate biosynthesis; chorismate from D-erythrose 4-phosphate and phosphoenolpyruvate: step 2/7. Functionally, catalyzes the conversion of 3-deoxy-D-arabino-heptulosonate 7-phosphate (DAHP) to dehydroquinate (DHQ). In Streptococcus pyogenes serotype M5 (strain Manfredo), this protein is 3-dehydroquinate synthase.